Here is a 112-residue protein sequence, read N- to C-terminus: Putative pterin-4-alpha-carbinolamine dehydratase (112 aa).

The protein belongs to the pterin-4-alpha-carbinolamine dehydratase family.

It catalyses the reaction (4aS,6R)-4a-hydroxy-L-erythro-5,6,7,8-tetrahydrobiopterin = (6R)-L-erythro-6,7-dihydrobiopterin + H2O. This is Putative pterin-4-alpha-carbinolamine dehydratase from Dechloromonas aromatica (strain RCB).